A 166-amino-acid polypeptide reads, in one-letter code: Regulatory protein RecX (166 aa).

Belongs to the RecX family.

Its subcellular location is the cytoplasm. Functionally, modulates RecA activity. The chain is Regulatory protein RecX from Escherichia coli (strain SMS-3-5 / SECEC).